A 92-amino-acid polypeptide reads, in one-letter code: UPF0250 protein Smlt4048 (92 aa).

This sequence belongs to the UPF0250 family.

This chain is UPF0250 protein Smlt4048, found in Stenotrophomonas maltophilia (strain K279a).